Reading from the N-terminus, the 279-residue chain is Putative pyruvate, phosphate dikinase regulatory protein (279 aa).

153 to 160 (GISRTSKT) lines the ADP pocket.

It belongs to the pyruvate, phosphate/water dikinase regulatory protein family. PDRP subfamily.

It catalyses the reaction N(tele)-phospho-L-histidyl/L-threonyl-[pyruvate, phosphate dikinase] + ADP = N(tele)-phospho-L-histidyl/O-phospho-L-threonyl-[pyruvate, phosphate dikinase] + AMP + H(+). The catalysed reaction is N(tele)-phospho-L-histidyl/O-phospho-L-threonyl-[pyruvate, phosphate dikinase] + phosphate + H(+) = N(tele)-phospho-L-histidyl/L-threonyl-[pyruvate, phosphate dikinase] + diphosphate. Its function is as follows. Bifunctional serine/threonine kinase and phosphorylase involved in the regulation of the pyruvate, phosphate dikinase (PPDK) by catalyzing its phosphorylation/dephosphorylation. The chain is Putative pyruvate, phosphate dikinase regulatory protein from Brucella abortus (strain 2308).